We begin with the raw amino-acid sequence, 465 residues long: GTPase Der (465 aa).

EngA-type G domains follow at residues Phe3–Phe166 and Ile184–Asn358. GTP is bound by residues Gly9–Ser16, Asp56–Ile60, Asn118–Asp121, Gly190–Ser197, Asp237–Val241, and Asn302–Asp305. Positions Lys359 to Glu443 constitute a KH-like domain.

The protein belongs to the TRAFAC class TrmE-Era-EngA-EngB-Septin-like GTPase superfamily. EngA (Der) GTPase family. As to quaternary structure, associates with the 50S ribosomal subunit.

Functionally, GTPase that plays an essential role in the late steps of ribosome biogenesis. This is GTPase Der from Francisella philomiragia subsp. philomiragia (strain ATCC 25017 / CCUG 19701 / FSC 153 / O#319-036).